Here is a 235-residue protein sequence, read N- to C-terminus: Uridylate kinase (235 aa).

Residue 8–11 (KLSG) coordinates ATP. Gly-49 contributes to the UMP binding site. ATP is bound by residues Gly-50 and Arg-54. Residue 131 to 138 (TGNPYFST) coordinates UMP. Positions 159, 165, and 168 each coordinate ATP.

This sequence belongs to the UMP kinase family. As to quaternary structure, homohexamer.

Its subcellular location is the cytoplasm. It catalyses the reaction UMP + ATP = UDP + ADP. It functions in the pathway pyrimidine metabolism; CTP biosynthesis via de novo pathway; UDP from UMP (UMPK route): step 1/1. Its activity is regulated as follows. Inhibited by UTP. In terms of biological role, catalyzes the reversible phosphorylation of UMP to UDP. This chain is Uridylate kinase, found in Mycoplasma pneumoniae (strain ATCC 29342 / M129 / Subtype 1) (Mycoplasmoides pneumoniae).